A 149-amino-acid polypeptide reads, in one-letter code: Transcriptional regulator MraZ (149 aa).

SpoVT-AbrB domains are found at residues 9–52 and 82–125; these read AYSY…PRAQ and AQEV…DRAR.

The protein belongs to the MraZ family. As to quaternary structure, forms oligomers.

It is found in the cytoplasm. Its subcellular location is the nucleoid. In Treponema pallidum subsp. pallidum (strain SS14), this protein is Transcriptional regulator MraZ.